A 335-amino-acid polypeptide reads, in one-letter code: RNA 3'-terminal phosphate cyclase (335 aa).

ATP is bound by residues glutamine 101 and 282–285 (HMGD). Histidine 306 serves as the catalytic Tele-AMP-histidine intermediate.

This sequence belongs to the RNA 3'-terminal cyclase family. Type 1 subfamily.

It localises to the cytoplasm. The catalysed reaction is a 3'-end 3'-phospho-ribonucleotide-RNA + ATP = a 3'-end 2',3'-cyclophospho-ribonucleotide-RNA + AMP + diphosphate. Its function is as follows. Catalyzes the conversion of 3'-phosphate to a 2',3'-cyclic phosphodiester at the end of RNA. The mechanism of action of the enzyme occurs in 3 steps: (A) adenylation of the enzyme by ATP; (B) transfer of adenylate to an RNA-N3'P to produce RNA-N3'PP5'A; (C) and attack of the adjacent 2'-hydroxyl on the 3'-phosphorus in the diester linkage to produce the cyclic end product. The biological role of this enzyme is unknown but it is likely to function in some aspects of cellular RNA processing. This Sulfolobus acidocaldarius (strain ATCC 33909 / DSM 639 / JCM 8929 / NBRC 15157 / NCIMB 11770) protein is RNA 3'-terminal phosphate cyclase.